The primary structure comprises 147 residues: MKTPAQRLHLLPLLLLLCGECAQVCGCNETGMLERLPRCGKAFADMMQKVAVWKWCNLSEFIVYYESFTNCTEMETNIMGCYWPNPLAQSFITGIHRQFFSNCTVDRTHWEDPPDEVLIPLIAVPVVLTVAMAGLVVWRSKHTDRLL.

The N-terminal stretch at 1–22 (MKTPAQRLHLLPLLLLLCGECA) is a signal peptide. The Extracellular segment spans residues 23–112 (QVCGCNETGM…CTVDRTHWED (90 aa)). N-linked (GlcNAc...) asparagine glycosylation is found at asparagine 28, asparagine 57, asparagine 70, and asparagine 102. Cystine bridges form between cysteine 39–cysteine 71 and cysteine 56–cysteine 103. Residues 113-137 (PPDEVLIPLIAVPVVLTVAMAGLVV) traverse the membrane as a helical segment. Topologically, residues 138–147 (WRSKHTDRLL) are cytoplasmic.

It belongs to the RAMP family. In terms of assembly, heterodimer of CALCRL and RAMP3; interaction induces allosteric modulation of CALCRL function and ligand specificity for adrenomedullin/ADM and intermedin/ADM2. Heterodimer of CALCR and RAMP3; interaction form the receptor complex AMYR3 for amylin/IAPP. Interacts with GPER1. Expressed predominantly in the testis, embryonic and adult brain and in kidney.

The protein resides in the cell membrane. The protein localises to the membrane. Accessory protein that interacts with and modulates the function of G-protein coupled receptors including calcitonin gene-related peptide type 1 receptor (CALCRL), calcitonin receptor (CALCR) and G-protein coupled estrogen receptor 1 (GPER1). Required for the transport of CALCRL and GPER1 receptors to the plasma membrane. Plays a role in cardioprotection by reducing cardiac hypertrophy and perivascular fibrosis in a GPER1-dependent manner. Together with CALCRL, form a receptor complex for adrenomedullin/ADM and intermedin/ADM2. Together with CALCR, act as a receptor complex for amylin/IAPP. The polypeptide is Receptor activity-modifying protein 3 (Mus musculus (Mouse)).